The sequence spans 254 residues: Low affinity immunoglobulin gamma Fc region receptor III-A (254 aa).

The first 20 residues, 1-20 (MWQLLLPTALLLLVSAGMRA), serve as a signal peptide directing secretion. 2 consecutive Ig-like C2-type domains span residues 24-105 (PKAV…LEVH) and 107-189 (GWLL…VNIT). 2 disulfide bridges follow: cysteine 47–cysteine 89 and cysteine 128–cysteine 172. Residue asparagine 187 is glycosylated (N-linked (GlcNAc...) asparagine). The chain crosses the membrane as a helical span at residues 207–229 (YQVSFCLVMVLLFAVDTGLYFSV). Positions 234–254 (PSSTSDWKDHKFKWSKDPQDK) are disordered. Basic and acidic residues predominate over residues 239–254 (DWKDHKFKWSKDPQDK).

Forms a heterooligomeric complex with ITAM-containing signaling subunits, either a homodimer of CD247, a homodimer of FCER1G or a heterodimer of CD247 and FCER1G, to form a functional receptor complex. Interacts (via transmembrane domain) with signaling subunits; this interaction is a prerequisite for receptor complex expression on the cell surface and intracellular signal transduction. Binds the Fc region of antigen-complexed IgG with a preference for IgG1 and IgG3 isotypes. Interacts with CD2; this interaction is involved in NK cell activation and cytotoxicity. Interacts with S100A4; this interaction inhibits PKC-dependent phosphorylation of FCGR3A. Glycosylated. Glycosylation plays an inhibitory role in the interaction with IgG1 and IgG2. In terms of processing, undergoes rapid ectodomain shedding upon NK cell stimulation. The soluble form is produced by a proteolytic cleavage mediated by ADAM17. Repeated stimulation causes receptor shedding, a mechanism that allows for increased NK cell motility and detachment from opsonized target cells while avoiding activation-induced NK cell apoptosis. Lymphocytes and monocytes.

It is found in the cell membrane. It localises to the secreted. Functionally, receptor for the invariable Fc fragment of immunoglobulin gamma (IgG). Optimally activated upon binding of clustered antigen-IgG complexes displayed on cell surfaces, triggers lysis of antibody-coated cells, a process known as antibody-dependent cellular cytotoxicity (ADCC). Does not bind free monomeric IgG, thus avoiding inappropriate effector cell activation in the absence of antigenic trigger. Mediates IgG effector functions on natural killer (NK) cells. Binds antigen-IgG complexes generated upon infection and triggers NK cell-dependent cytokine production and degranulation to limit viral load and propagation. Involved in the generation of memory-like adaptive NK cells capable to produce high amounts of IFNG and to efficiently eliminate virus-infected cells via ADCC. Regulates NK cell survival and proliferation, in particular by preventing NK cell progenitor apoptosis. Fc-binding subunit that associates with CD247 and/or FCER1G adapters to form functional signaling complexes. Following the engagement of antigen-IgG complexes, triggers phosphorylation of immunoreceptor tyrosine-based activation motif (ITAM)-containing adapters with subsequent activation of phosphatidylinositol 3-kinase signaling and sustained elevation of intracellular calcium that ultimately drive NK cell activation. The ITAM-dependent signaling coupled to receptor phosphorylation by PKC mediates robust intracellular calcium flux that leads to production of pro-inflammatory cytokines, whereas in the absence of receptor phosphorylation it mainly activates phosphatidylinositol 3-kinase signaling leading to cell degranulation. Costimulates NK cells and trigger lysis of target cells independently of IgG binding. Mediates the antitumor activities of therapeutic antibodies. Upon ligation on monocytes triggers TNFA-dependent ADCC of IgG-coated tumor cells. Mediates enhanced ADCC in response to afucosylated IgGs. The protein is Low affinity immunoglobulin gamma Fc region receptor III-A (FCGR3A) of Papio anubis (Olive baboon).